The sequence spans 216 residues: DNA gyrase subunit B (216 aa).

One can recognise a Toprim domain in the interval 140–216 (SELFLVEGDS…PDKLRYHKIV (77 aa)).

Belongs to the type II topoisomerase GyrB family. As to quaternary structure, heterotetramer, composed of two GyrA and two GyrB chains. In the heterotetramer, GyrA contains the active site tyrosine that forms a transient covalent intermediate with DNA, while GyrB binds cofactors and catalyzes ATP hydrolysis.

It is found in the cytoplasm. The catalysed reaction is ATP-dependent breakage, passage and rejoining of double-stranded DNA.. In terms of biological role, a type II topoisomerase that negatively supercoils closed circular double-stranded (ds) DNA in an ATP-dependent manner to modulate DNA topology and maintain chromosomes in an underwound state. Negative supercoiling favors strand separation, and DNA replication, transcription, recombination and repair, all of which involve strand separation. Also able to catalyze the interconversion of other topological isomers of dsDNA rings, including catenanes and knotted rings. Type II topoisomerases break and join 2 DNA strands simultaneously in an ATP-dependent manner. The protein is DNA gyrase subunit B (gyrB) of Acinetobacter sp. (strain SEIP 12.81).